Here is a 210-residue protein sequence, read N- to C-terminus: Na(+)-translocating NADH-quinone reductase subunit D (210 aa).

5 consecutive transmembrane segments (helical) span residues 42–62 (FVMT…VSLI), 72–92 (IIVQ…VLKA), 103–123 (VFVG…AFAM), 131–151 (LIDG…VGFF), and 178–198 (NGLM…IWVI).

This sequence belongs to the NqrDE/RnfAE family. In terms of assembly, composed of six subunits; NqrA, NqrB, NqrC, NqrD, NqrE and NqrF.

The protein resides in the cell inner membrane. It carries out the reaction a ubiquinone + n Na(+)(in) + NADH + H(+) = a ubiquinol + n Na(+)(out) + NAD(+). Its function is as follows. NQR complex catalyzes the reduction of ubiquinone-1 to ubiquinol by two successive reactions, coupled with the transport of Na(+) ions from the cytoplasm to the periplasm. NqrA to NqrE are probably involved in the second step, the conversion of ubisemiquinone to ubiquinol. This Vibrio campbellii (strain ATCC BAA-1116) protein is Na(+)-translocating NADH-quinone reductase subunit D.